An 885-amino-acid polypeptide reads, in one-letter code: 3-hydroxy-3-methylglutaryl-coenzyme A reductase (885 aa).

Over 1–9 (MLSRLFRMH) the chain is Cytoplasmic. Residues 10-39 (GLFVASHPWEVIVGTVTLTICMMSMNMFTG) traverse the membrane as a helical segment. Residues 40 to 56 (NDKICGWNYECPKFEED) are Lumenal-facing. Residues 57–78 (VLSSDIIILTITRCIAILYIYF) form a helical membrane-spanning segment. One can recognise an SSD domain in the interval 61-218 (DIIILTITRC…MTFFPACVSL (158 aa)). Residues 75–78 (YIYF) carry the INSIG-binding motif motif. Topologically, residues 79 to 89 (QFQNLRQLGSK) are cytoplasmic. Lys-89 participates in a covalent cross-link: Glycyl lysine isopeptide (Lys-Gly) (interchain with G-Cter in ubiquitin). Residues 90 to 114 (YILGIAGLFTIFSSFVFSTVVIHFL) traverse the membrane as a helical segment. At 115-123 (DKELTGLNE) the chain is on the lumenal side. The chain crosses the membrane as a helical span at residues 124 to 149 (ALPFFLLLIDLSRASALAKFALSSNS). Residues 150-159 (QDEVRENIAR) lie on the Cytoplasmic side of the membrane. Residues 160–187 (GMAILGPTFTLDALVECLVIGVGTMSGV) traverse the membrane as a helical segment. The Lumenal portion of the chain corresponds to 188-191 (RQLE). A helical membrane pass occupies residues 192–220 (IMCCFGCMSVLATYFVFMTFFPACVSLVL). Over 221–248 (ELSRESREGRPIWQLSHFARVLEGEENK) the chain is Cytoplasmic. A Glycyl lysine isopeptide (Lys-Gly) (interchain with G-Cter in ubiquitin) cross-link involves residue Lys-248. The helical transmembrane segment at 249-275 (PNPVTQRVKIIMSLGLVLVHAHSRWIA) threads the bilayer. Residues 276–314 (DPSPQNSTADNSKVSLGLDENVSKRIEPSVSLWQFYLSK) are Lumenal-facing. 2 N-linked (GlcNAc...) asparagine glycosylation sites follow: Asn-281 and Asn-296. A helical membrane pass occupies residues 315–339 (MISMDIEQVITLTLALLLAVKYIFF). Residues 340–885 (EQAETESTLS…LQGTCTKKAA (546 aa)) are Cytoplasmic-facing. Residues Glu-558, Lys-688, and Asp-764 each act as charge relay system in the active site. Catalysis depends on His-863, which acts as the Proton donor. Ser-869 is modified (phosphoserine; by AMPK).

The protein belongs to the HMG-CoA reductase family. As to quaternary structure, homotetramer. Homodimer. Interacts (via its SSD) with INSIG1; the interaction, accelerated by sterols, leads to the recruitment of HMGCR to AMFR/gp78 for its ubiquitination by the sterol-mediated ERAD pathway. Interacts with UBIAD1. Post-translationally, undergoes sterol-mediated ubiquitination and ER-associated degradation (ERAD). Accumulation of sterols in the endoplasmic reticulum (ER) membrane, triggers binding of the reductase to the ER membrane protein INSIG1 or INSIG2. The INSIG1 binding leads to the recruitment of the ubiquitin ligase, AMFR/gp78, RNF139 or RNF145, initiating ubiquitination of the reductase. The ubiquitinated reductase is then extracted from the ER membrane and delivered to cytosolic 26S proteosomes by a mechanism probably mediated by the ATPase Valosin-containing protein VCP/p97. The INSIG2-binding leads to the recruitment of the ubiquitin ligase RNF139, initiating ubiquitination of the reductase. Lys-248 is the main site of ubiquitination. Ubiquitination is enhanced by the presence of a geranylgeranylated protein. N-glycosylated. Deglycosylated by NGLY1 on release from the endoplasmic reticulum (ER) in a sterol-mediated manner. In terms of processing, phosphorylated. Phosphorylation at Ser-869 reduces the catalytic activity. High expression found in liver, heart, kidney, bladder and subcutaneous fat. Lower levels in lung, uterus and large intestine. Lowest levels in cerebrum, spleen, spinal cord, stomach, ovary, longissimus muscle, and small intestine.

It is found in the endoplasmic reticulum membrane. Its subcellular location is the peroxisome membrane. It carries out the reaction (R)-mevalonate + 2 NADP(+) + CoA = (3S)-3-hydroxy-3-methylglutaryl-CoA + 2 NADPH + 2 H(+). Its pathway is metabolic intermediate biosynthesis; (R)-mevalonate biosynthesis; (R)-mevalonate from acetyl-CoA: step 3/3. Regulated by a negative feedback mechanism through sterols and non-sterol metabolites derived from mevalonate. Phosphorylation at Ser-869 down-regulates the catalytic activity. In terms of biological role, catalyzes the conversion of (3S)-hydroxy-3-methylglutaryl-CoA (HMG-CoA) to mevalonic acid, the rate-limiting step in the synthesis of cholesterol and other isoprenoids, thus plays a critical role in cellular cholesterol homeostasis. This Sus scrofa (Pig) protein is 3-hydroxy-3-methylglutaryl-coenzyme A reductase (HMGCR).